Here is a 191-residue protein sequence, read N- to C-terminus: Calcium-activated potassium channel subunit beta-1 (191 aa).

Over 1–18 (MVKKLVMAQKRGETRALC) the chain is Cytoplasmic. A helical membrane pass occupies residues 19-39 (LGVTMVVCAVITYYILVTTVL). At 40–157 (PLYQKSVWTQ…FQRLYGPQAL (118 aa)) the chain is on the extracellular side. N-linked (GlcNAc...) asparagine glycosylation is found at N80 and N142. Residues 158–178 (LFSLFWPTFLLTGGLLIIAMV) form a helical membrane-spanning segment. Residues 179 to 191 (KSNQYLSILAAQK) are Cytoplasmic-facing.

Belongs to the KCNMB (TC 8.A.14.1) family. KCNMB1 subfamily. As to quaternary structure, interacts with KCNMA1 tetramer. There are probably 4 molecules of KCMNB1 per KCNMA1 tetramer. N-glycosylated. As to expression, abundantly expressed in smooth muscle. Low levels of expression in most other tissues. Within the brain, relatively high levels found in hippocampus and corpus callosum.

The protein localises to the membrane. Regulatory subunit of the calcium activated potassium KCNMA1 (maxiK) channel. Modulates the calcium sensitivity and gating kinetics of KCNMA1, thereby contributing to KCNMA1 channel diversity. Increases the apparent Ca(2+)/voltage sensitivity of the KCNMA1 channel. It also modifies KCNMA1 channel kinetics and alters its pharmacological properties. It slows down the activation and the deactivation kinetics of the channel. Acts as a negative regulator of smooth muscle contraction by enhancing the calcium sensitivity to KCNMA1. Its presence is also a requirement for internal binding of the KCNMA1 channel opener dehydrosoyasaponin I (DHS-1) triterpene glycoside and for external binding of the agonist hormone 17-beta-estradiol (E2). Increases the binding activity of charybdotoxin (CTX) toxin to KCNMA1 peptide blocker by increasing the CTX association rate and decreasing the dissociation rate. In Homo sapiens (Human), this protein is Calcium-activated potassium channel subunit beta-1 (KCNMB1).